The following is a 90-amino-acid chain: Nodulation protein NolS (90 aa).

Involved in nodulation of a particular host, M.lupulina. In Sinorhizobium meliloti (strain Sm2011 / Rm2011 / 2011), this protein is Nodulation protein NolS (nolS).